Reading from the N-terminus, the 132-residue chain is ATP synthase epsilon chain (132 aa).

Belongs to the ATPase epsilon chain family. F-type ATPases have 2 components, CF(1) - the catalytic core - and CF(0) - the membrane proton channel. CF(1) has five subunits: alpha(3), beta(3), gamma(1), delta(1), epsilon(1). CF(0) has three main subunits: a, b and c.

The protein resides in the cell membrane. Its function is as follows. Produces ATP from ADP in the presence of a proton gradient across the membrane. In Clostridium kluyveri (strain NBRC 12016), this protein is ATP synthase epsilon chain.